Consider the following 940-residue polypeptide: Serine/threonine-protein phosphatase 1 regulatory subunit 10 (940 aa).

The tract at residues 1–348 is interaction with TOX4; it reads MGSGPIDPKE…EPAPPSEAME (348 aa). The TFIIS N-terminal domain maps to 73-147; the sequence is KLLNNWLTYS…SDWMAVIRSQ (75 aa). Disordered stretches follow at residues 147–210, 248–270, 304–400, and 534–557; these read QSST…KFRS, NVAA…NTTP, KIKK…KSVT, and VETL…LPPV. Composition is skewed to basic and acidic residues over residues 153–166 and 174–196; these read AEKD…EGKS and PLTE…EKPK. Lys-179 is covalently cross-linked (Glycyl lysine isopeptide (Lys-Gly) (interchain with G-Cter in SUMO2)). At Thr-256 the chain carries Phosphothreonine. Lys-262 is covalently cross-linked (Glycyl lysine isopeptide (Lys-Gly) (interchain with G-Cter in SUMO2)). Ser-313 carries the post-translational modification Phosphoserine. The span at 325–336 shows a compositional bias: low complexity; it reads KTSTEPSTAKPS. Residues 357-433 form a necessary for interaction with PPP1CA region; it reads PPVEVPELMD…NKIKDFGEAA (77 aa). Ser-382 carries the phosphoserine modification. A necessary for interaction with PPP1CC region spans residues 393-408; it reads GRKRKSVTWPEEGKLR. A PP1-binding motif motif is present at residues 394–423; sequence RKRKSVTWPEEGKLREYFYFELDETERVNV. Residue Ser-398 is modified to Phosphoserine; by PKA. An interaction with WDR82 region spans residues 418–619; that stretch reads TERVNVNKIK…IKQMLVPHGL (202 aa). A compositionally biased stretch (gly residues) spans 540-551; the sequence is GGSGGSPDGAGG. Phosphoserine is present on residues Ser-545 and Ser-591. Residues 617-905 are disordered; it reads HGLLGPGPIA…HDGGHSHGGD (289 aa). Pro residues predominate over residues 644–655; the sequence is PPGPGGPMPGPH. Omega-N-methylarginine is present on Arg-665. Over residues 676 to 690 the composition is skewed to low complexity; that stretch reads GDPFWDGPGDPMRGG. An omega-N-methylarginine mark is found at Arg-693 and Arg-738. Composition is skewed to gly residues over residues 725–763 and 789–844; these read ARGG…GMGN and GSMG…GSGG. Composition is skewed to basic and acidic residues over residues 861–886 and 894–903; these read PHDV…HDGP and RGHDGGHSHG. The segment at 906-934 adopts a C3H1-type zinc-finger fold; the sequence is MSNRPVCRHFMMKGNCRYENNCAFYHPGV.

Component of the PNUTS-PP1 complex (also named PTW/PP1 complex), composed of PPP1R10/PNUTS, TOX4, WDR82, and PPP1CA (or PPP1CB or PPP1CC). Phosphorylated on Ser-398 by PKA within the region necessary for interaction with PPP1CA.

Its subcellular location is the nucleus. The protein resides in the chromosome. In terms of biological role, substrate-recognition component of the PNUTS-PP1 protein phosphatase complex, a protein phosphatase 1 (PP1) complex that promotes RNA polymerase II transcription pause-release, allowing transcription elongation. Promoter-proximal pausing by RNA polymerase II is a transcription halt following transcription initiation but prior to elongation, which acts as a checkpoint to control that transcripts are favorably configured for transcriptional elongation. The PNUTS-PP1 complex mediates the release of RNA polymerase II from promoter-proximal region of genes by catalyzing dephosphorylation of proteins involved in transcription, such as AFF4, CDK9, MEPCE, INTS12, NCBP1, POLR2M/GDOWN1 and SUPT6H. The PNUTS-PP1 complex also regulates RNA polymerase II transcription termination by mediating dephosphorylation of SUPT5H in termination zones downstream of poly(A) sites, thereby promoting deceleration of RNA polymerase II transcription. PNUTS-PP1 complex is also involved in the response to replication stress by mediating dephosphorylation of POLR2A at 'Ser-5' of the CTD, promoting RNA polymerase II degradation. The PNUTS-PP1 complex also plays a role in the control of chromatin structure and cell cycle progression during the transition from mitosis into interphase. PNUTS-PP1 complex mediates dephosphorylation of MYC, promoting MYC stability by preventing MYC ubiquitination by the SCF(FBXW7) complex. In addition to acts as a substrate-recognition component, PPP1R10/PNUTS also acts as a nuclear targeting subunit for the PNUTS-PP1 complex. In some context, PPP1R10/PNUTS also acts as an inhibitor of protein phosphatase 1 (PP1) activity by preventing access to substrates, such as RB. The polypeptide is Serine/threonine-protein phosphatase 1 regulatory subunit 10 (PPP1R10) (Pan troglodytes (Chimpanzee)).